We begin with the raw amino-acid sequence, 495 residues long: Meiosis-specific nuclear structural protein 1 (495 aa).

An interaction with BBOF1 region spans residues 1-314; that stretch reads MASKRRNMSC…KLEEMLRQRE (314 aa). A coiled-coil region spans residues 59–410; that stretch reads LLQNEQFELD…QLEHRRAVEK (352 aa). Phosphotyrosine is present on Tyr-188.

The protein belongs to the MNS1 family. As to quaternary structure, able to form oligomers. Microtubule inner protein component of sperm flagellar doublet microtubules. Interacts with ODAD1. Interacts with BBOF1.

The protein resides in the nucleus. It is found in the cytoplasm. It localises to the cytoskeleton. The protein localises to the cilium axoneme. Its subcellular location is the flagellum axoneme. Microtubule inner protein (MIP) part of the dynein-decorated doublet microtubules (DMTs) in cilia axoneme, which is required for motile cilia beating. May play a role in the control of meiotic division and germ cell differentiation through regulation of pairing and recombination during meiosis. Required for sperm flagella assembly. May play a role in the assembly and function of the outer dynein arm-docking complex (ODA-DC). ODA-DC mediates outer dynein arms (ODA) binding onto the axonemal doublet microtubules. This Macaca fascicularis (Crab-eating macaque) protein is Meiosis-specific nuclear structural protein 1 (MNS1).